Here is a 185-residue protein sequence, read N- to C-terminus: MLRAATNLYSPPNTGKMSPKTIGSDVGIEVIPVMTGTFLSGAMMSLFLLTIPVILETTTVPSQLLNQWHRIFYRGHIQGPLISIATGLLYSYAAYQRSQRGAAWKPFAVSAAVTVAMIPFTWVFMANVNNSLFRAVAVTEKGGEGNWNEAQGLVRSWGAWNAVRALFPLSGAVLGLLSTCKIVSF.

A run of 3 helical transmembrane segments spans residues 35–55, 75–95, and 106–126; these read TGTFLSGAMMSLFLLTIPVIL, GHIQGPLISIATGLLYSYAAY, and PFAVSAAVTVAMIPFTWVFMA. N-linked (GlcNAc...) asparagine glycosylation is present at N129. The helical transmembrane segment at 165 to 185 threads the bilayer; the sequence is ALFPLSGAVLGLLSTCKIVSF.

This sequence belongs to the anthrone oxygenase family.

The protein localises to the membrane. It participates in mycotoxin biosynthesis. In terms of biological role, monooxygenase; part of the fragmented gene cluster that mediates the biosynthesis of dothistromin (DOTH), a polyketide toxin very similar in structure to the aflatoxin precursor, versicolorin B. The first step of the pathway is the conversion of acetate to norsolorinic acid (NOR) and requires the fatty acid synthase subunits hexA and hexB, as well as the polyketide synthase pksA. PksA combines a hexanoyl starter unit and 7 malonyl-CoA extender units to synthesize the precursor NOR. The hexanoyl starter unit is provided to the acyl-carrier protein (ACP) domain by the fungal fatty acid synthase hexA/hexB. The second step is the conversion of NOR to averantin (AVN) and requires the norsolorinic acid ketoreductase nor1, which catalyzes the dehydration of norsolorinic acid to form (1'S)-averantin. The cytochrome P450 monooxygenase avnA then catalyzes the hydroxylation of AVN to 5'hydroxyaverantin (HAVN). The next step is performed by adhA that transforms HAVN to averufin (AVF). Averufin might then be converted to hydroxyversicolorone by cypX and avfA. Hydroxyversicolorone is further converted versiconal hemiacetal acetate (VHA) by moxY. VHA is then the substrate for the versiconal hemiacetal acetate esterase est1 to yield versiconal (VAL). Versicolorin B synthase vbsA then converts VAL to versicolorin B (VERB) by closing the bisfuran ring. Then, the activity of the versicolorin B desaturase verB leads to versicolorin A (VERA). DotB, a predicted chloroperoxidase, may perform epoxidation of the A-ring of VERA. Alternatively, a cytochrome P450, such as cypX or avnA could catalyze this step. It is also possible that another, uncharacterized, cytochrome P450 enzyme is responsible for this step. Opening of the epoxide could potentially be achieved by the epoxide hydrolase epoA. However, epoA seems not to be required for DOTH biosynthesis, but other epoxide hydrolases may have the ability to complement this hydrolysis. Alternatively, opening of the epoxide ring could be achieved non-enzymatically. The next step is the deoxygenation of ring A to yield the 5,8-dihydroxyanthraquinone which is most likely catalyzed by the NADPH dehydrogenase encoded by ver1. The last stages of DOTH biosynthesis are proposed to involve hydroxylation of the bisfuran. OrdB and norB might have oxidative roles here. An alternative possibility is that cytochrome P450 monoogenases such as avnA and cypX might perform these steps in addition to previously proposed steps. This is Monooxygenase hypC from Dothistroma septosporum (strain NZE10 / CBS 128990) (Red band needle blight fungus).